The following is a 311-amino-acid chain: MKPTAIFLMGPTASGKTDLAIQLRSSLPVEVISVDSALIYKGMDIGTAKPSKEELALAPHRLIDILDPSESYSAMNFRDDALREMADITAQGKIPLLVGGTMLYYKALIEGLSPLPSADENIRAELEQKAAQQGWAALHTELAKIDPISAARINPSDSQRINRALEVFYITGKSLTELTEEKGEALPYDFVQFAIAPQDRHVLHERIEQRFHKMIELGFQAEVEKLYARGDLNINLPSIRCVGYRQMWEYLQGDYDHEEMIFRGICATRQLAKRQLTWLRGWKTPIQWLDSLQPQQAKETVLRHLDSYQKG.

10 to 17 (GPTASGKT) serves as a coordination point for ATP. 12 to 17 (TASGKT) provides a ligand contact to substrate. Interaction with substrate tRNA stretches follow at residues 35–38 (DSAL), 159–163 (QRINR), and 240–245 (RCVGYR).

It belongs to the IPP transferase family. As to quaternary structure, monomer. The cofactor is Mg(2+).

It catalyses the reaction adenosine(37) in tRNA + dimethylallyl diphosphate = N(6)-dimethylallyladenosine(37) in tRNA + diphosphate. Catalyzes the transfer of a dimethylallyl group onto the adenine at position 37 in tRNAs that read codons beginning with uridine, leading to the formation of N6-(dimethylallyl)adenosine (i(6)A). This chain is tRNA dimethylallyltransferase, found in Haemophilus influenzae (strain 86-028NP).